A 137-amino-acid chain; its full sequence is Ribosome-binding factor A (137 aa).

The protein belongs to the RbfA family. In terms of assembly, monomer. Binds 30S ribosomal subunits, but not 50S ribosomal subunits or 70S ribosomes.

It localises to the cytoplasm. Its function is as follows. One of several proteins that assist in the late maturation steps of the functional core of the 30S ribosomal subunit. Associates with free 30S ribosomal subunits (but not with 30S subunits that are part of 70S ribosomes or polysomes). Required for efficient processing of 16S rRNA. May interact with the 5'-terminal helix region of 16S rRNA. The protein is Ribosome-binding factor A of Rhodopseudomonas palustris (strain BisB18).